The primary structure comprises 160 residues: Ribosome maturation factor RimP (160 aa).

The protein belongs to the RimP family.

It localises to the cytoplasm. In terms of biological role, required for maturation of 30S ribosomal subunits. The polypeptide is Ribosome maturation factor RimP (Citrifermentans bemidjiense (strain ATCC BAA-1014 / DSM 16622 / JCM 12645 / Bem) (Geobacter bemidjiensis)).